The sequence spans 466 residues: 23S rRNA (uracil(1939)-C(5))-methyltransferase RlmD (466 aa).

The interval 1 to 22 (MSSQPNPTSHPEAASAASAASN) is disordered. Positions 17–81 (ASAASNDPVV…PSYEQAHLVE (65 aa)) constitute a TRAM domain. Positions 94, 100, 103, and 182 each coordinate [4Fe-4S] cluster. Residues Q290, F319, N324, E340, N368, and D389 each coordinate S-adenosyl-L-methionine. C422 (nucleophile) is an active-site residue.

The protein belongs to the class I-like SAM-binding methyltransferase superfamily. RNA M5U methyltransferase family. RlmD subfamily.

The catalysed reaction is uridine(1939) in 23S rRNA + S-adenosyl-L-methionine = 5-methyluridine(1939) in 23S rRNA + S-adenosyl-L-homocysteine + H(+). In terms of biological role, catalyzes the formation of 5-methyl-uridine at position 1939 (m5U1939) in 23S rRNA. The sequence is that of 23S rRNA (uracil(1939)-C(5))-methyltransferase RlmD from Cupriavidus metallidurans (strain ATCC 43123 / DSM 2839 / NBRC 102507 / CH34) (Ralstonia metallidurans).